Consider the following 208-residue polypeptide: Uracil phosphoribosyltransferase (208 aa).

5-phospho-alpha-D-ribose 1-diphosphate contacts are provided by residues Arg78, Arg103, and 130–138; that span reads DPMLATGGT. Uracil contacts are provided by residues Ile193 and 198–200; that span reads GDA. Asp199 lines the 5-phospho-alpha-D-ribose 1-diphosphate pocket.

This sequence belongs to the UPRTase family. The cofactor is Mg(2+).

The enzyme catalyses UMP + diphosphate = 5-phospho-alpha-D-ribose 1-diphosphate + uracil. It functions in the pathway pyrimidine metabolism; UMP biosynthesis via salvage pathway; UMP from uracil: step 1/1. Allosterically activated by GTP. Its function is as follows. Catalyzes the conversion of uracil and 5-phospho-alpha-D-ribose 1-diphosphate (PRPP) to UMP and diphosphate. This is Uracil phosphoribosyltransferase from Maridesulfovibrio salexigens (strain ATCC 14822 / DSM 2638 / NCIMB 8403 / VKM B-1763) (Desulfovibrio salexigens).